We begin with the raw amino-acid sequence, 86 residues long: Large ribosomal subunit protein eL43 (86 aa).

The segment at Cys38–Cys59 adopts a C4-type zinc-finger fold.

Belongs to the eukaryotic ribosomal protein eL43 family. The cofactor is Zn(2+).

This chain is Large ribosomal subunit protein eL43, found in Thermococcus onnurineus (strain NA1).